The following is a 147-amino-acid chain: Small ribosomal subunit protein bS16 (147 aa).

The tract at residues 81-147 is disordered; sequence QKFTGDTSPS…GDNSGEKAEA (67 aa). Composition is skewed to basic and acidic residues over residues 95-104 and 114-125; these read QPERPNKDDL and EAPREAITKKSE. Residues 126 to 140 show a composition bias toward low complexity; sequence GAAADEASESAAGDN.

This sequence belongs to the bacterial ribosomal protein bS16 family.

This Cutibacterium acnes (strain DSM 16379 / KPA171202) (Propionibacterium acnes) protein is Small ribosomal subunit protein bS16.